The sequence spans 770 residues: Metallothionein expression activator (770 aa).

Residues 77–97 (LVPSPKTGDGSSDKKNIDRTW) are disordered. Phosphoserine is present on residues Ser80, Ser122, Ser247, Ser249, and Ser253. Thr259 carries the post-translational modification Phosphothreonine. A disordered region spans residues 286–323 (PPPTLISPRMSNTSINGSPSRKYHRQRYPNKSPESNGL). Residues 294-304 (RMSNTSINGSP) are compositionally biased toward polar residues. Residues Ser385, Ser392, and Ser483 each carry the phosphoserine modification. A phosphothreonine mark is found at Thr486 and Thr501. Residue Ser564 is modified to Phosphoserine. C2H2-type zinc fingers lie at residues 603 to 627 (FECL…IQTH) and 633 to 657 (YSCD…KISH). The C2H2-type 3; atypical zinc finger occupies 662–685 (YICPCGKRFNREDALMVHRSRMIC). Positions 699-770 (LTSPKKSLLD…RTLSNETDAL (72 aa)) are disordered. The span at 705–745 (SLLDSPHDTSPVKETIARDKDGSVLMKMEEQLRDDMRKHGL) shows a compositional bias: basic and acidic residues. 2 positions are modified to phosphoserine: Ser709 and Ser714. Positions 754 to 770 (AHEQNSNRTLSNETDAL) are enriched in polar residues.

It is found in the nucleus. Plays a role in regulating basal-level expression of CUP1. Activates EGT2 transcription in the absence of SWI5. The chain is Metallothionein expression activator (ACE2) from Saccharomyces cerevisiae (strain ATCC 204508 / S288c) (Baker's yeast).